Consider the following 302-residue polypeptide: tRNA-cytidine(32) 2-sulfurtransferase (302 aa).

Positions 44–49 match the PP-loop motif motif; sequence SGGKDS. The [4Fe-4S] cluster site is built by Cys-119, Cys-122, and Cys-210.

The protein belongs to the TtcA family. As to quaternary structure, homodimer. The cofactor is Mg(2+). [4Fe-4S] cluster is required as a cofactor.

The protein resides in the cytoplasm. It carries out the reaction cytidine(32) in tRNA + S-sulfanyl-L-cysteinyl-[cysteine desulfurase] + AH2 + ATP = 2-thiocytidine(32) in tRNA + L-cysteinyl-[cysteine desulfurase] + A + AMP + diphosphate + H(+). It participates in tRNA modification. Functionally, catalyzes the ATP-dependent 2-thiolation of cytidine in position 32 of tRNA, to form 2-thiocytidine (s(2)C32). The sulfur atoms are provided by the cysteine/cysteine desulfurase (IscS) system. This chain is tRNA-cytidine(32) 2-sulfurtransferase, found in Teredinibacter turnerae (strain ATCC 39867 / T7901).